The sequence spans 468 residues: Glutamine synthetase (468 aa).

The GS beta-grasp domain maps to 14–98 (HDVKYVDLRF…ILCDVYEPST (85 aa)). The GS catalytic domain occupies 106-468 (PRGIAKAAEK…PIEYKMYYSV (363 aa)). Residues E131 and E133 each contribute to the Mg(2+) site. E209 serves as a coordination point for ATP. Residues E214 and E221 each coordinate Mg(2+). L-glutamate contacts are provided by residues 265 to 266 (NG) and G266. H270 contributes to the Mg(2+) binding site. Residues 272-274 (HQS) and S274 contribute to the ATP site. R322, E328, and R340 together coordinate L-glutamate. The ATP site is built by R340, R345, and K353. Residue E358 participates in Mg(2+) binding. R360 serves as a coordination point for L-glutamate. Y398 bears the O-AMP-tyrosine mark.

It belongs to the glutamine synthetase family. As to quaternary structure, oligomer of 12 subunits arranged in the form of two hexameric ring. Requires Mg(2+) as cofactor.

Its subcellular location is the cytoplasm. The catalysed reaction is L-glutamate + NH4(+) + ATP = L-glutamine + ADP + phosphate + H(+). With respect to regulation, the activity of this enzyme could be controlled by adenylation under conditions of abundant glutamine. In terms of biological role, catalyzes the ATP-dependent biosynthesis of glutamine from glutamate and ammonia. This is Glutamine synthetase from Azospirillum brasilense.